Here is a 952-residue protein sequence, read N- to C-terminus: DNA topoisomerase 1 (952 aa).

Residues 12-135 (RRLVIVESPA…VKRMVFHEIT (124 aa)) enclose the Toprim domain. 2 residues coordinate Mg(2+): glutamate 18 and aspartate 104. Residues 150-602 (NQKLVDAQET…RFYFGEGDGT (453 aa)) enclose the Topo IA-type catalytic domain. The tract at residues 184–189 (SAGRVQ) is interaction with DNA. Catalysis depends on tyrosine 334, which acts as the O-(5'-phospho-DNA)-tyrosine intermediate. A disordered region spans residues 847–952 (RFGPYVTDGE…KATASKTSED (106 aa)). A compositionally biased stretch (basic and acidic residues) spans 871 to 884 (TPERGYELLAEKRA). Over residues 885 to 906 (KGPAKKTAKKAVKKTAAKKAPA) the composition is skewed to basic residues. Composition is skewed to low complexity over residues 907–930 (KKAA…AAKS) and 937–952 (AKTA…TSED).

It belongs to the type IA topoisomerase family. In terms of assembly, monomer. Mg(2+) is required as a cofactor.

The enzyme catalyses ATP-independent breakage of single-stranded DNA, followed by passage and rejoining.. In terms of biological role, releases the supercoiling and torsional tension of DNA, which is introduced during the DNA replication and transcription, by transiently cleaving and rejoining one strand of the DNA duplex. Introduces a single-strand break via transesterification at a target site in duplex DNA. The scissile phosphodiester is attacked by the catalytic tyrosine of the enzyme, resulting in the formation of a DNA-(5'-phosphotyrosyl)-enzyme intermediate and the expulsion of a 3'-OH DNA strand. The free DNA strand then undergoes passage around the unbroken strand, thus removing DNA supercoils. Finally, in the religation step, the DNA 3'-OH attacks the covalent intermediate to expel the active-site tyrosine and restore the DNA phosphodiester backbone. Relaxes supercoiled plasmid in vitro; in the presence of sIHF (integration host factor) relaxation is decreased. The polypeptide is DNA topoisomerase 1 (Streptomyces coelicolor (strain ATCC BAA-471 / A3(2) / M145)).